A 75-amino-acid chain; its full sequence is Tautomerase PptA (75 aa).

Residue proline 2 is the Proton acceptor; via imino nitrogen of the active site.

This sequence belongs to the 4-oxalocrotonate tautomerase family. PptA subfamily. In terms of assembly, homodimer.

It is found in the cytoplasm. The polypeptide is Tautomerase PptA (Shigella sonnei (strain Ss046)).